We begin with the raw amino-acid sequence, 417 residues long: Cobalamin binding intrinsic factor (417 aa).

Residues 1 to 18 (MAWFALYLLSLLWATAGT) form the signal peptide. 3 cysteine pairs are disulfide-bonded: cysteine 26–cysteine 246, cysteine 103–cysteine 288, and cysteine 143–cysteine 182. Position 171 (aspartate 171) interacts with cob(II)alamin. Serine 191 bears the Phosphoserine mark. Residues aspartate 222 and glutamine 270 each contribute to the cob(II)alamin site. 3 N-linked (GlcNAc...) asparagine glycosylation sites follow: asparagine 311, asparagine 330, and asparagine 334. Residues 365–370 (SWGLVV) and 386–395 (WQFLSGVTPL) each bind cob(II)alamin. Residue asparagine 413 is glycosylated (N-linked (GlcNAc...) asparagine).

It belongs to the eukaryotic cobalamin transport proteins family. Interacts with CUBN (via CUB domains). As to expression, gastric mucosa.

It is found in the secreted. In terms of biological role, promotes absorption of the essential vitamin cobalamin (Cbl) in the ileum. After interaction with CUBN, the CBLIF-cobalamin complex is internalized via receptor-mediated endocytosis. The sequence is that of Cobalamin binding intrinsic factor from Homo sapiens (Human).